The primary structure comprises 457 residues: Bifunctional protein GlmU (457 aa).

A pyrophosphorylase region spans residues 1–228 (MEGLVTLILA…SEEITGVNSR (228 aa)). Residues 9–12 (LAAG), Lys23, Gln73, and 78–79 (GT) each bind UDP-N-acetyl-alpha-D-glucosamine. A Mg(2+)-binding site is contributed by Asp102. The UDP-N-acetyl-alpha-D-glucosamine site is built by Gly139, Glu154, Asn169, and Asn226. Asn226 provides a ligand contact to Mg(2+). Residues 229-249 (VQLFEAEKIMRKRINYRHMEN) form a linker region. An N-acetyltransferase region spans residues 250 to 457 (GVTIVDPDTT…VQERIKKGRL (208 aa)). UDP-N-acetyl-alpha-D-glucosamine-binding residues include Arg331 and Lys349. The active-site Proton acceptor is His361. UDP-N-acetyl-alpha-D-glucosamine is bound by residues Tyr364 and Asn375. Acetyl-CoA contacts are provided by residues 384–385 (NY), Ala421, and Arg438.

In the N-terminal section; belongs to the N-acetylglucosamine-1-phosphate uridyltransferase family. The protein in the C-terminal section; belongs to the transferase hexapeptide repeat family. In terms of assembly, homotrimer. Mg(2+) serves as cofactor.

Its subcellular location is the cytoplasm. The catalysed reaction is alpha-D-glucosamine 1-phosphate + acetyl-CoA = N-acetyl-alpha-D-glucosamine 1-phosphate + CoA + H(+). It carries out the reaction N-acetyl-alpha-D-glucosamine 1-phosphate + UTP + H(+) = UDP-N-acetyl-alpha-D-glucosamine + diphosphate. Its pathway is nucleotide-sugar biosynthesis; UDP-N-acetyl-alpha-D-glucosamine biosynthesis; N-acetyl-alpha-D-glucosamine 1-phosphate from alpha-D-glucosamine 6-phosphate (route II): step 2/2. The protein operates within nucleotide-sugar biosynthesis; UDP-N-acetyl-alpha-D-glucosamine biosynthesis; UDP-N-acetyl-alpha-D-glucosamine from N-acetyl-alpha-D-glucosamine 1-phosphate: step 1/1. It functions in the pathway bacterial outer membrane biogenesis; LPS lipid A biosynthesis. Functionally, catalyzes the last two sequential reactions in the de novo biosynthetic pathway for UDP-N-acetylglucosamine (UDP-GlcNAc). The C-terminal domain catalyzes the transfer of acetyl group from acetyl coenzyme A to glucosamine-1-phosphate (GlcN-1-P) to produce N-acetylglucosamine-1-phosphate (GlcNAc-1-P), which is converted into UDP-GlcNAc by the transfer of uridine 5-monophosphate (from uridine 5-triphosphate), a reaction catalyzed by the N-terminal domain. This is Bifunctional protein GlmU from Thermoanaerobacter pseudethanolicus (strain ATCC 33223 / 39E) (Clostridium thermohydrosulfuricum).